Reading from the N-terminus, the 151-residue chain is ALK and LTK ligand 2 (151 aa).

The first 25 residues, 1–25 (MRVSGRPMLLALLLLLSTVGDRGRA), serve as a signal peptide directing secretion. 2 disulfides stabilise this stretch: Cys-112-Cys-148 and Cys-126-Cys-135.

This sequence belongs to the ALKAL family. As to quaternary structure, homodimer.

The protein localises to the secreted. It is found in the cell membrane. In terms of biological role, cytokine that acts as a physiological ligand for receptor tyrosine kinases LTK and ALK, leading to their activation. Cytokine-binding is sufficient to activate LTK. In contrast, ALKAL2-driven activation of ALK is coupled with heparin-binding to ALK. Stimulation of ALK signaling is involved in neural development and regulation of energy expenditure. In Mus musculus (Mouse), this protein is ALK and LTK ligand 2.